We begin with the raw amino-acid sequence, 604 residues long: Glutamine--fructose-6-phosphate aminotransferase [isomerizing] (604 aa).

Cys2 serves as the catalytic Nucleophile; for GATase activity. The region spanning 2–218 (CGIVGVVGNR…DKELVILTKD (217 aa)) is the Glutamine amidotransferase type-2 domain. 2 consecutive SIS domains span residues 284–423 (IITS…ANGK) and 452–594 (VAEK…VDKP). Lys599 acts as the For Fru-6P isomerization activity in catalysis.

Homodimer.

It localises to the cytoplasm. It carries out the reaction D-fructose 6-phosphate + L-glutamine = D-glucosamine 6-phosphate + L-glutamate. Functionally, catalyzes the first step in hexosamine metabolism, converting fructose-6P into glucosamine-6P using glutamine as a nitrogen source. The polypeptide is Glutamine--fructose-6-phosphate aminotransferase [isomerizing] (Streptococcus pyogenes serotype M3 (strain ATCC BAA-595 / MGAS315)).